Reading from the N-terminus, the 317-residue chain is Olfactory receptor 8B3 (317 aa).

The Extracellular segment spans residues 1–32; sequence MISMLAGNGSSVTEFVLAGLTDRPELQLPLFY. N-linked (GlcNAc...) asparagine glycosylation occurs at Asn8. The chain crosses the membrane as a helical span at residues 33 to 53; sequence LFLIIYIITVVGNLGLIILIG. The Cytoplasmic segment spans residues 54 to 59; that stretch reads LNPHLH. The chain crosses the membrane as a helical span at residues 60 to 80; that stretch reads TPMYYFLFNLSFIDLCYSSVF. Topologically, residues 81–97 are extracellular; it reads SPKMLINFVSEKNSISY. A helical transmembrane segment spans residues 98 to 118; it reads AGCMTQLFLFLFFVISECYML. Over 119 to 136 the chain is Cytoplasmic; it reads TSMAYDRYVAICNPLLYK. The chain crosses the membrane as a helical span at residues 137 to 157; sequence VTMSPQICSVISFAAYGMGFA. The Extracellular segment spans residues 158–199; the sequence is GSSAHTGCMLRLTFCNVNVINHYLCDILPLLQLSCTSTYVNE. A helical membrane pass occupies residues 200–220; that stretch reads VVVLIVVGINITVPSFTILIS. Residues 221 to 242 lie on the Cytoplasmic side of the membrane; sequence YVFILANILNIKSTQGRAKAFS. Residues 243–263 traverse the membrane as a helical segment; sequence TCSSHIMAISLFFGSAAFMYL. Over 264-274 the chain is Extracellular; it reads KYSSGSMEQGK. Residues 275 to 294 form a helical membrane-spanning segment; that stretch reads ISSVFYTNVGPMLNPLIYSL. Residues 295–317 lie on the Cytoplasmic side of the membrane; that stretch reads RNKDVKVALRKSLIKFREKTDFN.

This sequence belongs to the G-protein coupled receptor 1 family.

It is found in the cell membrane. Functionally, odorant receptor. This chain is Olfactory receptor 8B3, found in Mus musculus (Mouse).